We begin with the raw amino-acid sequence, 407 residues long: Putative cystathionine beta-lyase (407 aa).

The residue at position 237 (Lys237) is an N6-(pyridoxal phosphate)lysine.

It belongs to the class-II pyridoxal-phosphate-dependent aminotransferase family. MalY/PatB cystathionine beta-lyase subfamily. Pyridoxal 5'-phosphate serves as cofactor.

It catalyses the reaction L,L-cystathionine + H2O = L-homocysteine + pyruvate + NH4(+). It carries out the reaction an S-substituted L-cysteine + H2O = a thiol + pyruvate + NH4(+). Its pathway is amino-acid biosynthesis; L-methionine biosynthesis via de novo pathway; L-homocysteine from L-cystathionine: step 1/1. The protein is Putative cystathionine beta-lyase of Mycobacterium tuberculosis (strain CDC 1551 / Oshkosh).